The following is a 494-amino-acid chain: DDB1- and CUL4-associated factor 4 (494 aa).

The disordered stretch occupies residues 1–65 (MHQSSWKSRR…AGSSSVPDLP (65 aa)). Over residues 7-20 (KSRRHRRRGHRHSA) the composition is skewed to basic residues. A compositionally biased stretch (low complexity) spans 51–60 (STSSTAGSSS). WD repeat units follow at residues 367-406 (FHDSAVTSVQILQEEQCLMASDMAGTIKLWDLRTTKCIRQ) and 409-450 (GHVN…LLRT).

As to quaternary structure, interacts with DDB1 and CUL4A.

Its pathway is protein modification; protein ubiquitination. May function as a substrate receptor for CUL4-DDB1 E3 ubiquitin-protein ligase complex. The protein is DDB1- and CUL4-associated factor 4 (DCAF4) of Bos taurus (Bovine).